Here is a 28-residue protein sequence, read N- to C-terminus: uncharacterized protein (28 aa).

Basic residues predominate over residues 1–18 (MLPRKYKPAYKKQAHRVK). Residues 1–28 (MLPRKYKPAYKKQAHRVKSNPQPAYTFQ) are disordered. Residues 19–28 (SNPQPAYTFQ) are compositionally biased toward polar residues.

This is an uncharacterized protein from Saccharomyces cerevisiae (strain ATCC 204508 / S288c) (Baker's yeast).